We begin with the raw amino-acid sequence, 288 residues long: Formamidopyrimidine-DNA glycosylase (288 aa).

The active-site Schiff-base intermediate with DNA is Pro-2. The active-site Proton donor is Glu-3. Lys-59 (proton donor; for beta-elimination activity) is an active-site residue. Positions 93, 112, and 168 each coordinate DNA. Residues 254 to 288 (NVYGRGGEPCKRCGAPIKRVVVGGRSTHYCATCQR) form an FPG-type zinc finger. The active-site Proton donor; for delta-elimination activity is the Arg-278.

It belongs to the FPG family. In terms of assembly, monomer. It depends on Zn(2+) as a cofactor.

The catalysed reaction is Hydrolysis of DNA containing ring-opened 7-methylguanine residues, releasing 2,6-diamino-4-hydroxy-5-(N-methyl)formamidopyrimidine.. The enzyme catalyses 2'-deoxyribonucleotide-(2'-deoxyribose 5'-phosphate)-2'-deoxyribonucleotide-DNA = a 3'-end 2'-deoxyribonucleotide-(2,3-dehydro-2,3-deoxyribose 5'-phosphate)-DNA + a 5'-end 5'-phospho-2'-deoxyribonucleoside-DNA + H(+). Functionally, involved in base excision repair of DNA damaged by oxidation or by mutagenic agents. Acts as a DNA glycosylase that recognizes and removes damaged bases. Has a preference for oxidized purines, such as 7,8-dihydro-8-oxoguanine (8-oxoG). Has AP (apurinic/apyrimidinic) lyase activity and introduces nicks in the DNA strand. Cleaves the DNA backbone by beta-delta elimination to generate a single-strand break at the site of the removed base with both 3'- and 5'-phosphates. This is Formamidopyrimidine-DNA glycosylase from Corynebacterium jeikeium (strain K411).